A 108-amino-acid chain; its full sequence is AFAGILADADIAAALAACKAEGSFKHGEYFAKIGLKGKSAADIKKVFGIIDQDKSDFVEEDELKLFLQNFSAGARALTDAETATFLKAGDSDGDGKIGVDEFAAMVKG.

Ala1 is subject to N-acetylalanine. EF-hand domains lie at 38–73 (KSAA…FSAG) and 77–108 (LTDA…MVKG). Asp51, Asp53, Ser55, Phe57, Glu59, Glu62, Asp90, Asp92, Asp94, Lys96, and Glu101 together coordinate Ca(2+).

This sequence belongs to the parvalbumin family.

In muscle, parvalbumin is thought to be involved in relaxation after contraction. It binds two calcium ions. This chain is Parvalbumin beta 2, found in Merluccius bilinearis (Silver hake).